The following is a 309-amino-acid chain: 2-dehydro-3-deoxygluconokinase (309 aa).

Substrate contacts are provided by residues 34-38 (GAEVN), tyrosine 89, 103-105 (YYR), and arginine 167. Residues 165–167 (NYR), serine 193, 219–225 (KRGAKGA), 248–251 (GAGD), and asparagine 275 contribute to the ATP site. Aspartate 251 contributes to the substrate binding site. The Proton acceptor role is filled by aspartate 251. Aspartate 287 contacts substrate.

It belongs to the carbohydrate kinase pfkB family. In terms of assembly, homohexamer; trimer of dimers.

It catalyses the reaction 2-dehydro-3-deoxy-D-gluconate + ATP = 2-dehydro-3-deoxy-6-phospho-D-gluconate + ADP + H(+). Its pathway is carbohydrate acid metabolism; 2-dehydro-3-deoxy-D-gluconate degradation; D-glyceraldehyde 3-phosphate and pyruvate from 2-dehydro-3-deoxy-D-gluconate: step 1/2. In terms of biological role, involved in the degradation of glucose via the semi-phosphorylative Entner-Doudoroff pathway. Catalyzes the phosphorylation of 2-keto-3-deoxygluconate (KDG) to produce 2-keto-3-deoxy-6-phosphogluconate (KDPG). This Thermus thermophilus (strain ATCC 27634 / DSM 579 / HB8) protein is 2-dehydro-3-deoxygluconokinase (kdgK).